A 146-amino-acid chain; its full sequence is Anti-sigma F factor (146 aa).

Belongs to the anti-sigma-factor family.

The catalysed reaction is L-seryl-[protein] + ATP = O-phospho-L-seryl-[protein] + ADP + H(+). It carries out the reaction L-threonyl-[protein] + ATP = O-phospho-L-threonyl-[protein] + ADP + H(+). In terms of biological role, binds to sigma F and blocks its ability to form an RNA polymerase holoenzyme (E-sigma F). Phosphorylates SpoIIAA on a serine residue. This phosphorylation may enable SpoIIAA to act as an anti-anti-sigma factor that counteracts SpoIIAB and thus releases sigma F from inhibition. This is Anti-sigma F factor from Geobacillus stearothermophilus (Bacillus stearothermophilus).